The primary structure comprises 192 residues: Probable nicotinate-nucleotide adenylyltransferase (192 aa).

This sequence belongs to the NadD family.

It catalyses the reaction nicotinate beta-D-ribonucleotide + ATP + H(+) = deamido-NAD(+) + diphosphate. It functions in the pathway cofactor biosynthesis; NAD(+) biosynthesis; deamido-NAD(+) from nicotinate D-ribonucleotide: step 1/1. In terms of biological role, catalyzes the reversible adenylation of nicotinate mononucleotide (NaMN) to nicotinic acid adenine dinucleotide (NaAD). The protein is Probable nicotinate-nucleotide adenylyltransferase of Staphylococcus haemolyticus (strain JCSC1435).